Here is a 103-residue protein sequence, read N- to C-terminus: Large ribosomal subunit protein bL21 (103 aa).

Belongs to the bacterial ribosomal protein bL21 family. In terms of assembly, part of the 50S ribosomal subunit. Contacts protein L20.

Functionally, this protein binds to 23S rRNA in the presence of protein L20. In Ruminiclostridium cellulolyticum (strain ATCC 35319 / DSM 5812 / JCM 6584 / H10) (Clostridium cellulolyticum), this protein is Large ribosomal subunit protein bL21.